The sequence spans 397 residues: Mannan endo-1,4-beta-mannosidase 1 (397 aa).

An N-terminal signal peptide occupies residues Met1–Ala23. The substrate site is built by Trp83 and Asn198. The active-site Proton donor is Glu199. Tyr276 provides a ligand contact to substrate. The active-site Nucleophile is the Glu316. Substrate is bound at residue Trp354.

The protein belongs to the glycosyl hydrolase 5 (cellulase A) family.

The protein resides in the secreted. The catalysed reaction is Random hydrolysis of (1-&gt;4)-beta-D-mannosidic linkages in mannans, galactomannans and glucomannans.. This chain is Mannan endo-1,4-beta-mannosidase 1 (MAN1), found in Solanum lycopersicum (Tomato).